The sequence spans 116 residues: Large ribosomal subunit protein bL19 (116 aa).

It belongs to the bacterial ribosomal protein bL19 family.

Functionally, this protein is located at the 30S-50S ribosomal subunit interface and may play a role in the structure and function of the aminoacyl-tRNA binding site. In Fusobacterium nucleatum subsp. nucleatum (strain ATCC 25586 / DSM 15643 / BCRC 10681 / CIP 101130 / JCM 8532 / KCTC 2640 / LMG 13131 / VPI 4355), this protein is Large ribosomal subunit protein bL19.